Here is a 400-residue protein sequence, read N- to C-terminus: NADH-quinone oxidoreductase subunit D (400 aa).

It belongs to the complex I 49 kDa subunit family. NDH-1 is composed of 14 different subunits. Subunits NuoB, C, D, E, F, and G constitute the peripheral sector of the complex.

It is found in the cell inner membrane. It catalyses the reaction a quinone + NADH + 5 H(+)(in) = a quinol + NAD(+) + 4 H(+)(out). Functionally, NDH-1 shuttles electrons from NADH, via FMN and iron-sulfur (Fe-S) centers, to quinones in the respiratory chain. The immediate electron acceptor for the enzyme in this species is believed to be a menaquinone. Couples the redox reaction to proton translocation (for every two electrons transferred, four hydrogen ions are translocated across the cytoplasmic membrane), and thus conserves the redox energy in a proton gradient. The polypeptide is NADH-quinone oxidoreductase subunit D (Chlorobium chlorochromatii (strain CaD3)).